A 393-amino-acid polypeptide reads, in one-letter code: Iripin-3 (393 aa).

Positions 1–16 (MKVITAFLSVFVLCSA) are cleaved as a signal peptide. N-linked (GlcNAc...) asparagine glycans are attached at residues asparagine 104 and asparagine 265.

This sequence belongs to the serpin family. In terms of assembly, interacts with human KLKB1. Interacts with human ST14. Interacts with human F2 (thrombin). Saliva (at protein level). Expressed in salivary gland. Expressed in ovary during blood feeding.

Its subcellular location is the secreted. Functionally, serine protease inhibitor that modulates blood feeding of ticks on vertebrate species. Moderately inhibits host plasma kallikrein (KLKB1), matriptase (ST14), trypsin, plasmin (PLG), thrombin (F2) and coagulation factor VIIa (F7). Slightly inhibits host alpha-chymotrypsin, tPA/tissue-type plasminogen activator (PLAT), uPA/urokinase-type plasminogen activator (PLAU) and coagulation factor XIIa (F12). Slightly inhibits the extrinsic pathway while not affecting the intrinsic and common pathways of host blood coagulation. Decreases synthesis and secretion of IL6 by mouse bone marrow-derived macrophages. Decreases viability of mouse B- and T-cells. Decreases proliferation of mouse CD4+ T-cells in response to stimulation. Inhibits Th1 immune responses in mouse cells. Promotes differentiation of mouse regulatory T-cells. The polypeptide is Iripin-3 (Ixodes ricinus (Common tick)).